We begin with the raw amino-acid sequence, 525 residues long: Vesicular inhibitory amino acid transporter (525 aa).

The Cytoplasmic segment spans residues 1–132 (MATLLRSKLS…WNVTNAIQGM (132 aa)). The tract at residues 83-107 (IHYQRGSGAPLPPSGSKDQVGGGGE) is disordered. The chain crosses the membrane as a helical span at residues 133-153 (FVLGLPYAILHGGYLGLFLII). The Lumenal, vesicle portion of the chain corresponds to 154–204 (FAAVVCCYTGKILIACLYEENEDGEVVRVRDSYVAIANACCAPRFPTLGGR). Y186 carries the 3'-nitrotyrosine modification. Residues 205 to 225 (VVNVAQIIELVMTCILYVVVS) traverse the membrane as a helical segment. Over 226–265 (GNLMYNSFPGLPVSQKSWSIIATAVLLPCAFLKNLKAVSK) the chain is Cytoplasmic. A helical transmembrane segment spans residues 266–286 (FSLLCTLAHFVINILVIAYCL). Residues 287–305 (SRARDWAWEKVKFYIDVKK) are Lumenal, vesicle-facing. A helical transmembrane segment spans residues 306–326 (FPISIGIIVFSYTSQIFLPSL). Topologically, residues 327–341 (EGNMQQPSEFHCMMN) are cytoplasmic. The helical transmembrane segment at 342 to 362 (WTHIAACVLKGLFALVAYLTW) threads the bilayer. The Lumenal, vesicle segment spans residues 363–383 (ADETKEVITDNLPGSIRAVVN). Residues 384–404 (IFLVAKALLSYPLPFFAAVEV) form a helical membrane-spanning segment. Topologically, residues 405–438 (LEKSLFQEGSRAFFPACYSGDGRLKSWGLTLRCA) are cytoplasmic. A helical transmembrane segment spans residues 439–459 (LVVFTLLMAIYVPHFALLMGL). The Lumenal, vesicle portion of the chain corresponds to 460 to 461 (TG). The helical transmembrane segment at 462-482 (SLTGAGLCFLLPSLFHLRLLW) threads the bilayer. Over 483–489 (RKLLWHQ) the chain is Cytoplasmic. Residues 490 to 510 (VFFDVAIFVIGGICSVSGFVH) traverse the membrane as a helical segment. At 511–525 (SLEGLIEAYRTNAED) the chain is on the lumenal, vesicle side.

The protein belongs to the amino acid/polyamine transporter 2 family. As to expression, retina. Expressed throughout the horizontal cells or more specifically at the terminals.

The protein resides in the cytoplasmic vesicle membrane. It localises to the presynapse. It catalyses the reaction 4-aminobutanoate(out) + n H(+)(in) = 4-aminobutanoate(in) + n H(+)(out). The enzyme catalyses glycine(out) + n H(+)(in) = glycine(in) + n H(+)(out). It carries out the reaction beta-alanine(out) + n H(+)(in) = beta-alanine(in) + n H(+)(out). Functionally, antiporter that exchanges vesicular protons for cytosolic 4-aminobutanoate or to a lesser extend glycine, thus allowing their secretion from nerve terminals. The transport is equally dependent on the chemical and electrical components of the proton gradient. May also transport beta-alanine. Acidification of GABAergic synaptic vesicles is a prerequisite for 4-aminobutanoate uptake. In Homo sapiens (Human), this protein is Vesicular inhibitory amino acid transporter.